We begin with the raw amino-acid sequence, 653 residues long: Chaperone protein DnaK (653 aa).

Position 200 is a phosphothreonine; by autocatalysis (Thr-200). Positions 612 to 653 (QGAAGAAGAAGGAGAAAGAEAAGASQQADDVVDAEFKEVKKD) are disordered. Positions 627 to 639 (AAGAEAAGASQQA) are enriched in low complexity.

This sequence belongs to the heat shock protein 70 family.

Acts as a chaperone. The chain is Chaperone protein DnaK from Paraburkholderia phymatum (strain DSM 17167 / CIP 108236 / LMG 21445 / STM815) (Burkholderia phymatum).